Here is a 957-residue protein sequence, read N- to C-terminus: Receptor-like protein 53 (957 aa).

The first 30 residues, 1–30 (MEGFWNSKSIIRITLSFIFLFICHFLDVLA), serve as a signal peptide directing secretion. Over 31–910 (APTRNLCRPE…EEEDEDLISW (880 aa)) the chain is Extracellular. Residues Asn-78, Asn-114, Asn-143, Asn-167, and Asn-191 are each glycosylated (N-linked (GlcNAc...) asparagine). LRR repeat units lie at residues 120–143 (LHFLTTLDLSFNDFKGQITSSIEN), 144–170 (LSHLTYLDLSSNHFSGQILNSIGNLSR), 172–192 (TYLNLFDNQFSGQAPSSICNL), 193–216 (SHLTFLDLSYNRFFGQFPSSIGGL), 217–240 (SHLTTLSLFSNKFSGQIPSSIGNL), 241–266 (SNLTTLDLSNNNFSGQIPSFIGNLSQ), 268–287 (TFLGLFSNNFVGEIPSSFGN), 288–312 (LNQLTRLYVDDNKLSGNFPNVLLNL), 313–336 (TGLSLLSLSNNKFTGTLPPNITSL), 338–360 (NLMDFDASDNAFTGTFPSFLFTI), 361–384 (PSLTYIRLNGNQLKGTLEFGNISS), and 386–409 (SNLYELDIGNNNFIGPIPSSISKL). N-linked (GlcNAc...) asparagine glycans are attached at residues Asn-239, Asn-242, Asn-252, and Asn-263. Residues Asn-311 and Asn-332 are each glycosylated (N-linked (GlcNAc...) asparagine). Asn-381 carries N-linked (GlcNAc...) asparagine glycosylation. An LRR 13; degenerate repeat occupies 412 to 433 (LFRLDISHLNTQGPVDFSIFSH). 16 LRR repeats span residues 434–458 (LKSLLDLNISHLNTTTRIDLNYFLS), 460–483 (FKRLLLLDLSGNHVSATNKSSVSD), 486–509 (SQLIQSLYLSGCGITEFPEFVRTQ), 510–533 (HELGFLDISNNKIKGQVPDWLWRL), 535–556 (ILYYVNLSNNTLIGFQRPSKPE), 558–580 (SLLYLLGSNNNFIGKIPSFICGL), 581–604 (RSLNTLDLSDNNFNGSIPRCMGHL), 605–629 (KSTLSVLNLRQNHLSGGLPKQIFEI), 631–651 (RSLDVGHNQLVGKLPRSLSFF), 652–674 (STLEVLNVESNRINDTFPFWLSS), 675–697 (LPKLQVLVLRSNAFHGPIHEATF), 698–721 (PELRIIDISHNRFNGTLPTEYFVK), 765–789 (LTIYTAVDFSGNRFEGEIPKSIGLL), 790–813 (KELLVLSLSNNAFSGHMPSSMGNL), 814–837 (TALESLDVSKNKLTGEIPQELGDL), and 839–862 (FLAYMNFSHNQLAGLVPGGQQFLT). 3 N-linked (GlcNAc...) asparagine glycosylation sites follow: Asn-441, Asn-446, and Asn-477. N-linked (GlcNAc...) asparagine glycosylation is found at Asn-540 and Asn-543. Asn-594 carries N-linked (GlcNAc...) asparagine glycosylation. A glycan (N-linked (GlcNAc...) asparagine) is linked at Asn-665. Asn-711 carries N-linked (GlcNAc...) asparagine glycosylation. N-linked (GlcNAc...) asparagine glycosylation is present at Asn-812. N-linked (GlcNAc...) asparagine glycosylation is found at Asn-844 and Asn-864. Residues 911–931 (IAAAIGFGPGIAFGLMFGYIL) traverse the membrane as a helical segment. Over 932 to 957 (VSYKPEWFMNPFDRNNRRQKRHKTTH) the chain is Cytoplasmic.

This sequence belongs to the RLP family.

It is found in the cell membrane. This Arabidopsis thaliana (Mouse-ear cress) protein is Receptor-like protein 53.